The primary structure comprises 691 residues: Elongation factor G (691 aa).

A tr-type G domain is found at 8–282; the sequence is ERVRNIGIAA…AVIDYLPAPI (275 aa). GTP-binding positions include 17–24, 81–85, and 135–138; these read AHIDAGKT, DTPGH, and NKMD.

It belongs to the TRAFAC class translation factor GTPase superfamily. Classic translation factor GTPase family. EF-G/EF-2 subfamily.

The protein resides in the cytoplasm. In terms of biological role, catalyzes the GTP-dependent ribosomal translocation step during translation elongation. During this step, the ribosome changes from the pre-translocational (PRE) to the post-translocational (POST) state as the newly formed A-site-bound peptidyl-tRNA and P-site-bound deacylated tRNA move to the P and E sites, respectively. Catalyzes the coordinated movement of the two tRNA molecules, the mRNA and conformational changes in the ribosome. The polypeptide is Elongation factor G (Prochlorococcus marinus (strain SARG / CCMP1375 / SS120)).